The primary structure comprises 177 residues: Protein Flattop (177 aa).

The tract at residues isoleucine 113–serine 177 is disordered. Basic and acidic residues predominate over residues glycine 115–lysine 124. Residues threonine 132–proline 163 show a composition bias toward polar residues.

Belongs to the Flattop family. As to quaternary structure, microtubule inner protein component of sperm flagellar doublet microtubules. Interacts with DLG3. Expressed in airway epithelial cells.

Its subcellular location is the cytoplasm. The protein resides in the cytoskeleton. It localises to the cilium basal body. It is found in the cell projection. The protein localises to the cilium. Its subcellular location is the apical cell membrane. The protein resides in the cilium axoneme. It localises to the flagellum axoneme. Microtubule inner protein (MIP) part of the dynein-decorated doublet microtubules (DMTs) in cilia axoneme. Acts as a regulator of cilium basal body docking and positioning in mono- and multiciliated cells. Regulates basal body docking and cilia formation in multiciliated lung cells. Regulates kinocilium positioning and stereocilia bundle morphogenesis in the inner ear. The polypeptide is Protein Flattop (Homo sapiens (Human)).